The sequence spans 251 residues: Pyrroloquinoline-quinone synthase (251 aa).

It belongs to the PqqC family.

The enzyme catalyses 6-(2-amino-2-carboxyethyl)-7,8-dioxo-1,2,3,4,7,8-hexahydroquinoline-2,4-dicarboxylate + 3 O2 = pyrroloquinoline quinone + 2 H2O2 + 2 H2O + H(+). It functions in the pathway cofactor biosynthesis; pyrroloquinoline quinone biosynthesis. Functionally, ring cyclization and eight-electron oxidation of 3a-(2-amino-2-carboxyethyl)-4,5-dioxo-4,5,6,7,8,9-hexahydroquinoline-7,9-dicarboxylic-acid to PQQ. The chain is Pyrroloquinoline-quinone synthase from Cronobacter sakazakii (strain ATCC BAA-894) (Enterobacter sakazakii).